Consider the following 392-residue polypeptide: Meiotically up-regulated gene 11 protein (392 aa).

Its subcellular location is the cytoplasm. The protein localises to the nucleus. Its function is as follows. Has a role in meiosis. The chain is Meiotically up-regulated gene 11 protein (mug11) from Schizosaccharomyces pombe (strain 972 / ATCC 24843) (Fission yeast).